A 182-amino-acid polypeptide reads, in one-letter code: UPF0397 protein BCAH820_2657 (182 aa).

The next 5 helical transmembrane spans lie at 9 to 29 (VVAI…GFTI), 40 to 60 (AILT…IGLI), 71 to 91 (WGIW…MGFI), 114 to 134 (ITGL…DIIV), and 142 to 162 (IVIQ…VLGL).

This sequence belongs to the UPF0397 family.

It localises to the cell membrane. This is UPF0397 protein BCAH820_2657 from Bacillus cereus (strain AH820).